Here is a 614-residue protein sequence, read N- to C-terminus: Glucose oxidase 1 (614 aa).

A signal peptide spans 1 to 15; the sequence is MKSIILSCFVISAAA. 3 residues coordinate FAD: Leu-52, Thr-53, and Glu-73. Asn-112 is a glycosylation site (N-linked (GlcNAc...) asparagine). The interval 117–136 is disordered; sequence IRSGNGLGGSTLTNGGSWTR. 4 residues coordinate FAD: Ser-126, Asn-130, Gly-131, and Ser-133. Asn-184 and Asn-191 each carry an N-linked (GlcNAc...) asparagine glycan. Cys-187 and Cys-229 form a disulfide bridge. Residue Val-273 coordinates FAD. Residues Asn-279, Asn-383, and Asn-416 are each glycosylated (N-linked (GlcNAc...) asparagine). The active-site Proton acceptor is His-544. O2-binding residues include Arg-565 and Val-566. Residues Gly-577 and Met-589 each contribute to the FAD site.

The protein belongs to the GMC oxidoreductase family. As to quaternary structure, homodimer. FAD is required as a cofactor.

The protein resides in the secreted. It localises to the cell wall. The protein localises to the cytoplasm. Its subcellular location is the extracellular space. It is found in the extracellular matrix. The enzyme catalyses beta-D-glucose + O2 = D-glucono-1,5-lactone + H2O2. In terms of biological role, glucose oxidase catalyzes the oxidation of beta-D-glucose to D-glucono-delta-lactone and hydrogen peroxide in the presence of molecular oxygen. In Penicillium expansum (Blue mold rot fungus), this protein is Glucose oxidase 1.